Consider the following 265-residue polypeptide: Ribosomal RNA small subunit methyltransferase A (265 aa).

H17, L19, G44, E65, D90, and N112 together coordinate S-adenosyl-L-methionine.

The protein belongs to the class I-like SAM-binding methyltransferase superfamily. rRNA adenine N(6)-methyltransferase family. RsmA subfamily.

It is found in the cytoplasm. The enzyme catalyses adenosine(1518)/adenosine(1519) in 16S rRNA + 4 S-adenosyl-L-methionine = N(6)-dimethyladenosine(1518)/N(6)-dimethyladenosine(1519) in 16S rRNA + 4 S-adenosyl-L-homocysteine + 4 H(+). Specifically dimethylates two adjacent adenosines (A1518 and A1519) in the loop of a conserved hairpin near the 3'-end of 16S rRNA in the 30S particle. May play a critical role in biogenesis of 30S subunits. This chain is Ribosomal RNA small subunit methyltransferase A, found in Xylella fastidiosa (strain Temecula1 / ATCC 700964).